The chain runs to 64 residues: Large ribosomal subunit protein uL30 (64 aa).

Belongs to the universal ribosomal protein uL30 family. Part of the 50S ribosomal subunit.

This is Large ribosomal subunit protein uL30 from Beijerinckia indica subsp. indica (strain ATCC 9039 / DSM 1715 / NCIMB 8712).